The chain runs to 82 residues: Small ribosomal subunit protein bS16 (82 aa).

Belongs to the bacterial ribosomal protein bS16 family.

This Yersinia pseudotuberculosis serotype O:1b (strain IP 31758) protein is Small ribosomal subunit protein bS16.